We begin with the raw amino-acid sequence, 309 residues long: Mitochondrial import receptor subunit TOM34 (309 aa).

TPR repeat units lie at residues 9–42 (VEEL…LQAQ), 51–84 (SVLY…VPFS), and 86–118 (KPLL…DDSV). Residue S160 is modified to Phosphoserine. The disordered stretch occupies residues 161–189 (LPSENHKEMAKSKSKETTATKNRVPSAGD). Residues 164–178 (ENHKEMAKSKSKETT) show a composition bias toward basic and acidic residues. S186 is subject to Phosphoserine. TPR repeat units lie at residues 193–226 (AKVL…SNLE), 227–260 (SATY…DGKN), and 262–294 (KAFY…EPRN). K197 is covalently cross-linked (Glycyl lysine isopeptide (Lys-Gly) (interchain with G-Cter in SUMO2)).

It belongs to the Tom34 family. In terms of assembly, interacts with HSP90A, VCP, ATP6V1D, KIAA0665, AMPK, and DMAP1 through its TPR repeat.

The protein resides in the cytoplasm. Its subcellular location is the mitochondrion outer membrane. Functionally, plays a role in the import of cytosolically synthesized preproteins into mitochondria. Binds the mature portion of precursor proteins. Interacts with cellular components, and possesses weak ATPase activity. May be a chaperone-like protein that helps to keep newly synthesized precursors in an unfolded import compatible state. The sequence is that of Mitochondrial import receptor subunit TOM34 (TOMM34) from Pongo abelii (Sumatran orangutan).